Consider the following 366-residue polypeptide: Galactoside alpha-(1,2)-fucosyltransferase 1 (366 aa).

Residues 1 to 8 lie on the Cytoplasmic side of the membrane; the sequence is MWPLSHRH. A helical; Signal-anchor for type II membrane protein membrane pass occupies residues 9–25; that stretch reads LCLAFLLVCVLSAISFF. Residues 26 to 366 lie on the Lumenal side of the membrane; that stretch reads LHVHQDSFRH…LSPLWTLAEP (341 aa). Residues asparagine 66, asparagine 302, and asparagine 328 are each glycosylated (N-linked (GlcNAc...) asparagine).

It belongs to the glycosyltransferase 11 family.

The protein resides in the golgi apparatus. Its subcellular location is the golgi stack membrane. The enzyme catalyses a beta-D-galactosyl-(1-&gt;4)-N-acetyl-beta-D-glucosaminyl derivative + GDP-beta-L-fucose = an alpha-L-Fuc-(1-&gt;2)-beta-D-Gal-(1-&gt;4)-beta-D-GlcNAc derivative + GDP + H(+). The catalysed reaction is a ganglioside GA1 + GDP-beta-L-fucose = a ganglioside Fuc-GA1 + GDP + H(+). It catalyses the reaction a beta-D-Gal-(1-&gt;3)-beta-D-GlcNAc-(1-&gt;3)-beta-D-Gal-(1-&gt;4)-beta-D-Glc-(1&lt;-&gt;1')-Cer(d18:1(4E)) + GDP-beta-L-fucose = alpha-L-fucosyl-(1-&gt;2)- beta-D-galactosyl-(1-&gt;3)-N-acetyl-beta-D-glucosaminyl-(1-&gt;3)-beta-D-galactosyl-(1-&gt;4)-beta-D-glucosyl-(1&lt;-&gt;1')-N-acylsphing-4-enine + GDP + H(+). It carries out the reaction a neolactoside nLc4Cer(d18:1(4E)) + GDP-beta-L-fucose = a neolactoside IV(2)-alpha-Fuc-nLc4Cer(d18:1(4E)) + GDP + H(+). The enzyme catalyses a ganglioside GM1 + GDP-beta-L-fucose = a ganglioside Fuc-GM1 + GDP + H(+). The catalysed reaction is beta-D-galactosyl-(1-&gt;3)-N-acetyl-D-galactosamine + GDP-beta-L-fucose = alpha-L-fucosyl-(1-&gt;2)-beta-D-galactosyl-(1-&gt;3)-N-acetyl-D-galactosamine + GDP + H(+). It participates in protein modification; protein glycosylation. In terms of biological role, catalyzes the transfer of L-fucose, from a guanosine diphosphate-beta-L-fucose, to the terminal galactose residue of glycoconjugates through an alpha(1,2) linkage leading to H antigen synthesis that is an intermediate substrate in the synthesis of ABO blood group antigens. H antigen is essential for maturation of the glomerular layer of the main olfactory bulb, in cell migration and early cell-cell contacts during tumor associated angiogenesis. Preferentially fucosylates soluble lactose and to a lesser extent fucosylates glycolipids gangliosides GA1 and GM1a. The protein is Galactoside alpha-(1,2)-fucosyltransferase 1 of Alouatta belzebul (Red-handed howler monkey).